Reading from the N-terminus, the 523-residue chain is Ubiquitin carboxyl-terminal hydrolase 22-B (523 aa).

The UBP-type zinc-finger motif lies at 4–121 (AGCSHVNSFK…KEEQRKAWKL (118 aa)). Cys-6, His-8, Cys-46, Cys-49, Cys-59, Cys-62, Cys-67, His-72, His-76, His-82, Cys-95, and Cys-98 together coordinate Zn(2+). Residues 174-518 (RGLINLGNTC…EGYLLFYHKQ (345 aa)) form the USP domain. The active-site Nucleophile is the Cys-183. His-477 (proton acceptor) is an active-site residue.

It belongs to the peptidase C19 family. UBP8 subfamily. As to quaternary structure, component of some SAGA transcription coactivator-HAT complexes.

Its subcellular location is the nucleus. The enzyme catalyses Thiol-dependent hydrolysis of ester, thioester, amide, peptide and isopeptide bonds formed by the C-terminal Gly of ubiquitin (a 76-residue protein attached to proteins as an intracellular targeting signal).. Functionally, histone deubiquitinating component of the transcription regulatory histone acetylation (HAT) complex SAGA. Catalyzes the deubiquitination of both histones H2A and H2B, thereby acting as a coactivator. Recruited to specific gene promoters by activators, where it is required for transcription. The sequence is that of Ubiquitin carboxyl-terminal hydrolase 22-B (usp22-b) from Xenopus laevis (African clawed frog).